Here is a 223-residue protein sequence, read N- to C-terminus: Glycosylphosphatidylinositol anchor biosynthesis protein 11 (223 aa).

6 consecutive transmembrane segments (helical) span residues 25 to 45 (LAVVYGTLLLVYLRFIFSAGI), 52 to 72 (VMTQALPGLLLLHMGYCVVVL), 88 to 108 (MIAAALSVFFSVIIFGLLVLF), 120 to 140 (FVCAMHMSILAVLPLFFTYHL), 158 to 178 (VYAASVCTLIGAWLGAIPIPY), and 189 to 209 (ITILAGAYLGYFVGTLGGIAL).

Belongs to the PIGF family.

It localises to the endoplasmic reticulum membrane. Its pathway is glycolipid biosynthesis; glycosylphosphatidylinositol-anchor biosynthesis. In terms of biological role, acts in the GPI biosynthetic pathway between GlcNAc-PI synthesis and GPI transfer to protein. This Yarrowia lipolytica (strain CLIB 122 / E 150) (Yeast) protein is Glycosylphosphatidylinositol anchor biosynthesis protein 11 (GPI11).